Consider the following 232-residue polypeptide: Ribose-5-phosphate isomerase A (232 aa).

Residues 28 to 31, 83 to 86, and 96 to 99 each bind substrate; these read TGST, DGAD, and KGGG. Glu105 (proton acceptor) is an active-site residue. Lys123 provides a ligand contact to substrate.

Belongs to the ribose 5-phosphate isomerase family. As to quaternary structure, homodimer.

The enzyme catalyses aldehydo-D-ribose 5-phosphate = D-ribulose 5-phosphate. It functions in the pathway carbohydrate degradation; pentose phosphate pathway; D-ribose 5-phosphate from D-ribulose 5-phosphate (non-oxidative stage): step 1/1. Its function is as follows. Catalyzes the reversible conversion of ribose-5-phosphate to ribulose 5-phosphate. This Rhizobium etli (strain ATCC 51251 / DSM 11541 / JCM 21823 / NBRC 15573 / CFN 42) protein is Ribose-5-phosphate isomerase A.